A 352-amino-acid polypeptide reads, in one-letter code: Uroporphyrinogen decarboxylase (352 aa).

Residues 26–30, Phe45, Asp76, Tyr153, Ser208, and His323 each bind substrate; that span reads RQAGR.

It belongs to the uroporphyrinogen decarboxylase family. As to quaternary structure, homodimer.

The protein resides in the cytoplasm. It catalyses the reaction uroporphyrinogen III + 4 H(+) = coproporphyrinogen III + 4 CO2. It participates in porphyrin-containing compound metabolism; protoporphyrin-IX biosynthesis; coproporphyrinogen-III from 5-aminolevulinate: step 4/4. Its function is as follows. Catalyzes the decarboxylation of four acetate groups of uroporphyrinogen-III to yield coproporphyrinogen-III. This is Uroporphyrinogen decarboxylase from Parasynechococcus marenigrum (strain WH8102).